Consider the following 346-residue polypeptide: Biotin synthase (346 aa).

The Radical SAM core domain maps to 38 to 256 (RQVQVSTLLS…IAVARIMMPT (219 aa)). [4Fe-4S] cluster contacts are provided by cysteine 53, cysteine 57, and cysteine 60. Residues cysteine 97, cysteine 128, cysteine 188, and arginine 260 each coordinate [2Fe-2S] cluster.

This sequence belongs to the radical SAM superfamily. Biotin synthase family. Homodimer. The cofactor is [4Fe-4S] cluster. [2Fe-2S] cluster serves as cofactor.

It carries out the reaction (4R,5S)-dethiobiotin + (sulfur carrier)-SH + 2 reduced [2Fe-2S]-[ferredoxin] + 2 S-adenosyl-L-methionine = (sulfur carrier)-H + biotin + 2 5'-deoxyadenosine + 2 L-methionine + 2 oxidized [2Fe-2S]-[ferredoxin]. Its pathway is cofactor biosynthesis; biotin biosynthesis; biotin from 7,8-diaminononanoate: step 2/2. Its function is as follows. Catalyzes the conversion of dethiobiotin (DTB) to biotin by the insertion of a sulfur atom into dethiobiotin via a radical-based mechanism. This Escherichia coli (strain SE11) protein is Biotin synthase.